The sequence spans 203 residues: Translation initiation factor IF-3 (203 aa).

A compositionally biased stretch (basic and acidic residues) spans E172 to E182. Residues E172 to D203 are disordered.

Belongs to the IF-3 family. In terms of assembly, monomer.

It localises to the cytoplasm. IF-3 binds to the 30S ribosomal subunit and shifts the equilibrium between 70S ribosomes and their 50S and 30S subunits in favor of the free subunits, thus enhancing the availability of 30S subunits on which protein synthesis initiation begins. In Helicobacter pylori (strain J99 / ATCC 700824) (Campylobacter pylori J99), this protein is Translation initiation factor IF-3.